Here is a 576-residue protein sequence, read N- to C-terminus: Keratin, type II cytoskeletal 5 (576 aa).

Residues 1–163 (MSRQSSVSFR…DPTIQRVRTE (163 aa)) form a head region. 4 positions are modified to phosphoserine: Ser-5, Ser-8, Ser-16, and Ser-21. At Thr-24 the chain carries Phosphothreonine; by CDK1. Phosphoserine occurs at positions 26, 36, 46, 60, 67, 71, 74, and 78. Position 147 is a phosphothreonine; by CDK1 (Thr-147). Thr-162 bears the Phosphothreonine; by AURKB mark. The interval 164–199 (EREQIKTLNNKFASFIDKVRFLEQQNKVLDTKWTLL) is coil 1A. One can recognise an IF rod domain in the interval 164–477 (EREQIKTLNN…KLLEGEECRL (314 aa)). Residues 200 to 218 (QEQGTKTIKQNLDPLFEQY) are linker 1. The interval 219–311 (INNLRRQLDG…FFDAELSQMQ (93 aa)) is coil 1B. Positions 312–334 (THVSDTSVVLSMDNNRSLDLDSI) are linker 12. The segment at 335 to 473 (IAEVKAQYED…ATYRKLLEGE (139 aa)) is coil 2. Positions 474-576 (ECRLSGEGVG…TSSSRRSFKS (103 aa)) are tail. Arg-527 is modified (omega-N-methylarginine). Residues 540 to 557 (GFSASSGQGGGFSSGGGS) show a composition bias toward gly residues. The interval 540 to 576 (GFSASSGQGGGFSSGGGSSSSVKFVSTTSSSRRSFKS) is disordered. Residues 558–576 (SSSVKFVSTTSSSRRSFKS) show a composition bias toward low complexity.

This sequence belongs to the intermediate filament family. As to quaternary structure, heterodimer of a type I and a type II keratin. Heterodimer with type I keratin KRT25 leading to the formation of keratin intermediate filament (KIF) network. Forms a heterodimer (via 2B domains) with KRT14 (via 2B domains). Interacts with TCHP. Interacts with EPPK1. Interacts with AMELX. Interacts with PKP1 (via N-terminus) and PKP2. In terms of processing, phosphorylated by CDK1, AURKB and Rho-kinase, phosphorylation is regulated by the cell cycle. Thr-24 phosphorylation, mediated by CDK1, peaks during prometaphase or metaphase cells with phosphorylated filamentous structures evident throughout the cytoplasm during early mitosis. CDK1 phosphorylates Thr-24 in mitotic cells at the site of injury. O-glycosylated. Expressed in the epidermis (at protein level) and testis (within pachytene spermatocytes).

The protein localises to the cytoplasm. Its function is as follows. Required for the formation of keratin intermediate filaments in the basal epidermis and maintenance of the skin barrier in response to mechanical stress. Regulates the recruitment of Langerhans cells to the epidermis, potentially by modulation of the abundance of macrophage chemotactic cytokines, macrophage inflammatory cytokines and CTNND1 localization in keratinocytes. This chain is Keratin, type II cytoskeletal 5, found in Rattus norvegicus (Rat).